The sequence spans 688 residues: Methionine--tRNA ligase (688 aa).

Positions 13–23 match the 'HIGH' region motif; it reads PYANGPIHIGH. Zn(2+)-binding residues include Cys-144, Cys-147, Cys-157, and Cys-160. Residues 334 to 338 carry the 'KMSKS' region motif; sequence KMSKS. Position 337 (Lys-337) interacts with ATP. The region spanning 582–688 is the tRNA-binding domain; sequence DFAKIDLRVA…AGAVPGMRVR (107 aa).

The protein belongs to the class-I aminoacyl-tRNA synthetase family. MetG type 1 subfamily. Homodimer. Zn(2+) is required as a cofactor.

It localises to the cytoplasm. It catalyses the reaction tRNA(Met) + L-methionine + ATP = L-methionyl-tRNA(Met) + AMP + diphosphate. Its function is as follows. Is required not only for elongation of protein synthesis but also for the initiation of all mRNA translation through initiator tRNA(fMet) aminoacylation. The polypeptide is Methionine--tRNA ligase (Ralstonia nicotianae (strain ATCC BAA-1114 / GMI1000) (Ralstonia solanacearum)).